The primary structure comprises 337 residues: Glyceraldehyde-3-phosphate dehydrogenase (337 aa).

Residues 13-14 (RI), Asp35, and Arg80 each bind NAD(+). Residues 151–153 (SCT), Thr182, 211–212 (TG), and Arg234 contribute to the D-glyceraldehyde 3-phosphate site. The active-site Nucleophile is Cys152. Asn316 contributes to the NAD(+) binding site.

It belongs to the glyceraldehyde-3-phosphate dehydrogenase family. In terms of assembly, homotetramer.

The protein resides in the cytoplasm. It carries out the reaction D-glyceraldehyde 3-phosphate + phosphate + NAD(+) = (2R)-3-phospho-glyceroyl phosphate + NADH + H(+). Its pathway is carbohydrate degradation; glycolysis; pyruvate from D-glyceraldehyde 3-phosphate: step 1/5. The chain is Glyceraldehyde-3-phosphate dehydrogenase (GPD1) from Monascus purpureus (Red mold).